A 255-amino-acid polypeptide reads, in one-letter code: Indole-3-glycerol phosphate synthase (255 aa).

It belongs to the TrpC family.

It carries out the reaction 1-(2-carboxyphenylamino)-1-deoxy-D-ribulose 5-phosphate + H(+) = (1S,2R)-1-C-(indol-3-yl)glycerol 3-phosphate + CO2 + H2O. It functions in the pathway amino-acid biosynthesis; L-tryptophan biosynthesis; L-tryptophan from chorismate: step 4/5. In Streptococcus gordonii (strain Challis / ATCC 35105 / BCRC 15272 / CH1 / DL1 / V288), this protein is Indole-3-glycerol phosphate synthase.